The chain runs to 420 residues: D-tagatose-1,6-bisphosphate aldolase subunit GatZ (420 aa).

This sequence belongs to the GatZ/KbaZ family. GatZ subfamily. As to quaternary structure, forms a complex with GatY.

The protein operates within carbohydrate metabolism; D-tagatose 6-phosphate degradation; D-glyceraldehyde 3-phosphate and glycerone phosphate from D-tagatose 6-phosphate: step 2/2. In terms of biological role, component of the tagatose-1,6-bisphosphate aldolase GatYZ that is required for full activity and stability of the Y subunit. Could have a chaperone-like function for the proper and stable folding of GatY. When expressed alone, GatZ does not show any aldolase activity. Is involved in the catabolism of galactitol. In Shigella boydii serotype 18 (strain CDC 3083-94 / BS512), this protein is D-tagatose-1,6-bisphosphate aldolase subunit GatZ.